The primary structure comprises 571 residues: Sulfite reductase [NADPH] hemoprotein beta-component (571 aa).

[4Fe-4S] cluster is bound by residues Cys-435, Cys-441, Cys-480, and Cys-484. Cys-484 contributes to the siroheme binding site.

Belongs to the nitrite and sulfite reductase 4Fe-4S domain family. As to quaternary structure, alpha(8)-beta(8). The alpha component is a flavoprotein, the beta component is a hemoprotein. Requires siroheme as cofactor. [4Fe-4S] cluster serves as cofactor.

The enzyme catalyses hydrogen sulfide + 3 NADP(+) + 3 H2O = sulfite + 3 NADPH + 4 H(+). The protein operates within sulfur metabolism; hydrogen sulfide biosynthesis; hydrogen sulfide from sulfite (NADPH route): step 1/1. Its function is as follows. Component of the sulfite reductase complex that catalyzes the 6-electron reduction of sulfite to sulfide. This is one of several activities required for the biosynthesis of L-cysteine from sulfate. This Musicola paradisiaca (strain Ech703) (Dickeya paradisiaca) protein is Sulfite reductase [NADPH] hemoprotein beta-component.